Consider the following 461-residue polypeptide: Arginine biosynthesis bifunctional protein ArgJ, chloroplastic (461 aa).

Substrate is bound by residues T202, K228, T239, E326, N456, and T461. Residue T239 is the Nucleophile of the active site.

The protein belongs to the ArgJ family. Heterodimer of an alpha and a beta chain.

Its subcellular location is the plastid. It localises to the chloroplast. The enzyme catalyses N(2)-acetyl-L-ornithine + L-glutamate = N-acetyl-L-glutamate + L-ornithine. It catalyses the reaction L-glutamate + acetyl-CoA = N-acetyl-L-glutamate + CoA + H(+). It participates in amino-acid biosynthesis; L-arginine biosynthesis; L-ornithine and N-acetyl-L-glutamate from L-glutamate and N(2)-acetyl-L-ornithine (cyclic): step 1/1. Its pathway is amino-acid biosynthesis; L-arginine biosynthesis; N(2)-acetyl-L-ornithine from L-glutamate: step 1/4. Functionally, catalyzes two activities which are involved in the cyclic version of arginine biosynthesis: the synthesis of acetylglutamate from glutamate and acetyl-CoA, and of ornithine by transacetylation between acetylornithine and glutamate. In Ostreococcus lucimarinus (strain CCE9901), this protein is Arginine biosynthesis bifunctional protein ArgJ, chloroplastic.